A 671-amino-acid chain; its full sequence is MVTQLTKNAIDSLINSTNPDEQYVIQVLKAPQSVAENLFKICISDGFCKFKKGYFVSDAATKCQDLKDLCIIKCKKYIDDSNHDKERIIISNYELIYSNIQEQIGKPIEYKQYKSSGFSNPEGSTVIPSQYLSRNAQILQQNQVSQPKQMVTPPVSNINKPTPAVNNTFAQKPAVTNQNIQRVNQNPQQMNKTAPVKQNNNNNNNNNGNNKNNSSLQISTDGDEQNLEYIRNLQPNGQPQTIKVRITKKGDLKSFKEKQGKLFSIDVIDKFGDECSISFFNEIAEQYDGLFKVGQVIVLKQFSVKVNNNHQYNKGDHTVTVNKESKILICQEDPSIPMIKLNRQFIQDMQNKQKGDLIDLIVVVKADTEVKTMILKKDNQQQSKRDIISFDESLIETEITLWGETAKDYDAKQGDIIVFKDAKIGEFKDKKQINIGYGTQIFMNPDEQLFPQIHDVKKWYLSLNSDQLSTIQKAQGNDTGPREVTSFESSLNILKEEIKNLQTDPEMKIWKEIRGQIMYIKDTPLYYNACFSCKKKIARNNEVWTCINCNKDFNEPDSRYILSLNISDSTDTIWVSAFDEVGQKILGVKGDVFRYADEDTEHGTETKKKLLMAAQNKEYRFLLLTKQERDQNGNARDKTVIHAIKDFQPAYEAKKIINSLEKFMVIEENNP.

Disordered stretches follow at residues 143–166 (QVSQ…PAVN) and 190–219 (MNKT…LQIS). The segment covering 199-213 (NNNNNNNNNGNNKNN) has biased composition (low complexity). Residues 240 to 322 (QTIKVRITKK…NKGDHTVTVN (83 aa)) constitute a DNA-binding region (OB). The segment at 530 to 549 (CFSCKKKIARNNEVWTCINC) adopts a C4-type zinc-finger fold.

It belongs to the replication factor A protein 1 family. In terms of assembly, component of the replication protein A complex (RPA), a heterotrimeric complex composed of RPA1, RPA2/TEB2 and RPA3/TEB3.

Functionally, as part of the heterotrimeric replication protein A (RPA) complex, binds and stabilizes single-stranded DNA intermediates, that form during DNA replication or upon DNA stress. It prevents their reannealing and in parallel, recruits and activates different proteins and complexes involved in DNA metabolism. Thereby, it plays an essential role both in DNA replication and the cellular response to DNA damage. In the cellular response to DNA damage, the RPA complex controls DNA repair and DNA damage checkpoint activation. This chain is Replication protein A 70 kDa DNA-binding subunit, found in Tetrahymena thermophila (strain SB210).